The sequence spans 295 residues: Deleted in azoospermia-like (295 aa).

The segment covering 1-10 (MSAANPETPN) has biased composition (polar residues). Positions 1 to 25 (MSAANPETPNSTISREASTQSSSAA) are disordered. The span at 11 to 25 (STISREASTQSSSAA) shows a compositional bias: low complexity. One can recognise an RRM domain in the interval 40-115 (NTVFVGGIDV…KKLKLGPAIR (76 aa)). The segment at 80–132 (KGYGFVSFFNDVDVQKIVESQINFHGKKLKLGPAIRKQNLCAYHVQPRPLVFN) is homodimerization. Residues 167-190 (AYPTYPNSPVQVITGYQLPVYNYQ) form the DAZ domain. Y276 is modified (phosphotyrosine).

This sequence belongs to the RRM DAZ family. In terms of assembly, homodimer and heterodimer. Forms a heterodimer with DAZ. Interacts with BOLL, DAZAP1 and DAZAP2. Interacts with PUM2 Multiple DAZL RRMs can bind to a single RNA containing multiple GUU triplets. As to expression, testis specific.

Its subcellular location is the cytoplasm. It is found in the nucleus. Its function is as follows. RNA-binding protein, which is essential for gametogenesis in both males and females. Plays a central role during spermatogenesis. Acts by binding to the 3'-UTR of mRNA, specifically recognizing GUU triplets, and thereby regulating the translation of key transcripts. The chain is Deleted in azoospermia-like (DAZL) from Macaca fascicularis (Crab-eating macaque).